Here is a 266-residue protein sequence, read N- to C-terminus: HLA class II histocompatibility antigen, DR beta 4 chain (266 aa).

Positions 1-29 are cleaved as a signal peptide; the sequence is MVCLKLPGGSCMAALTVTLTVLSSPLALA. Positions 30 to 124 are beta-1; the sequence is GDTQPRFLEQ…VESFTVQRRV (95 aa). The Extracellular portion of the chain corresponds to 30-227; it reads GDTQPRFLEQ…SARSESAQSK (198 aa). Disulfide bonds link C44-C108 and C146-C202. The N-linked (GlcNAc...) asparagine glycan is linked to N48. A beta-2 region spans residues 125–227; that stretch reads QPKVTVYPSK…SARSESAQSK (103 aa). The region spanning 126 to 216 is the Ig-like C1-type domain; it reads PKVTVYPSKT…PSMMSPLTVQ (91 aa). The chain crosses the membrane as a helical span at residues 228-250; it reads MLSGVGGFVLGLLFLGTGLFIYF. Residues 251 to 266 are Cytoplasmic-facing; it reads RNQKGHSGLQPTGLLS. K254 participates in a covalent cross-link: Glycyl lysine isopeptide (Lys-Gly) (interchain with G-Cter in ubiquitin).

Belongs to the MHC class II family. Heterodimer of an alpha and a beta subunit; also referred as MHC class II molecule. In the endoplasmic reticulum (ER) it forms a heterononamer; 3 MHC class II molecules bind to a CD74 homotrimer (also known as invariant chain or HLA class II histocompatibility antigen gamma chain). In the endosomal/lysosomal system; CD74 undergoes sequential degradation by various proteases; leaving a small fragment termed CLIP on each MHC class II molecule. MHC class II molecule interacts with HLA_DM, and HLA_DO in B-cells, in order to release CLIP and facilitate the binding of antigenic peptides. In terms of processing, ubiquitinated by MARCH1 and MARCH8 at Lys-254 leading to sorting into the endosome system and down-regulation of MHC class II. When associated with ubiquitination of the alpha subunit of HLA-DR: HLA-DRA 'Lys-244', the down-regulation of MHC class II may be highly effective.

It is found in the cell membrane. The protein localises to the endoplasmic reticulum membrane. The protein resides in the golgi apparatus. Its subcellular location is the trans-Golgi network membrane. It localises to the endosome membrane. It is found in the lysosome membrane. The protein localises to the late endosome membrane. Its function is as follows. Binds peptides derived from antigens that access the endocytic route of antigen presenting cells (APC) and presents them on the cell surface for recognition by the CD4 T-cells. The peptide binding cleft accommodates peptides of 10-30 residues. The peptides presented by MHC class II molecules are generated mostly by degradation of proteins that access the endocytic route, where they are processed by lysosomal proteases and other hydrolases. Exogenous antigens that have been endocytosed by the APC are thus readily available for presentation via MHC II molecules, and for this reason this antigen presentation pathway is usually referred to as exogenous. As membrane proteins on their way to degradation in lysosomes as part of their normal turn-over are also contained in the endosomal/lysosomal compartments, exogenous antigens must compete with those derived from endogenous components. Autophagy is also a source of endogenous peptides, autophagosomes constitutively fuse with MHC class II loading compartments. In addition to APCs, other cells of the gastrointestinal tract, such as epithelial cells, express MHC class II molecules and CD74 and act as APCs, which is an unusual trait of the GI tract. To produce a MHC class II molecule that presents an antigen, three MHC class II molecules (heterodimers of an alpha and a beta chain) associate with a CD74 trimer in the ER to form a heterononamer. Soon after the entry of this complex into the endosomal/lysosomal system where antigen processing occurs, CD74 undergoes a sequential degradation by various proteases, including CTSS and CTSL, leaving a small fragment termed CLIP (class-II-associated invariant chain peptide). The removal of CLIP is facilitated by HLA-DM via direct binding to the alpha-beta-CLIP complex so that CLIP is released. HLA-DM stabilizes MHC class II molecules until primary high affinity antigenic peptides are bound. The MHC II molecule bound to a peptide is then transported to the cell membrane surface. In B-cells, the interaction between HLA-DM and MHC class II molecules is regulated by HLA-DO. Primary dendritic cells (DCs) also to express HLA-DO. Lysosomal microenvironment has been implicated in the regulation of antigen loading into MHC II molecules, increased acidification produces increased proteolysis and efficient peptide loading. The sequence is that of HLA class II histocompatibility antigen, DR beta 4 chain (HLA-DRB4) from Homo sapiens (Human).